The primary structure comprises 527 residues: NAD(P)H-quinone oxidoreductase chain 4 1 (527 aa).

The next 14 helical transmembrane spans lie at 5–25 (FPWL…LPII), 35–55 (WYSL…FCTG), 90–110 (LIIL…PVSF), 112–132 (PKLF…VFAV), 136–156 (LLFF…LSIW), 168–188 (FILY…TMAF), 211–231 (LLLY…FPLH), 242–262 (TAPA…YALL), 274–294 (AVFA…AALT), 310–330 (ISHM…GLSG), 331–351 (AVLQ…LVGA), 386–406 (LALP…GFAT), 416–436 (VLVI…LLSM), and 463–483 (VFII…PKIV).

This sequence belongs to the complex I subunit 4 family.

The protein localises to the cellular thylakoid membrane. The enzyme catalyses a plastoquinone + NADH + (n+1) H(+)(in) = a plastoquinol + NAD(+) + n H(+)(out). It catalyses the reaction a plastoquinone + NADPH + (n+1) H(+)(in) = a plastoquinol + NADP(+) + n H(+)(out). NDH-1 shuttles electrons from NAD(P)H, via FMN and iron-sulfur (Fe-S) centers, to quinones in the respiratory chain. The immediate electron acceptor for the enzyme in this species is believed to be plastoquinone. Couples the redox reaction to proton translocation (for every two electrons transferred, four hydrogen ions are translocated across the cytoplasmic membrane), and thus conserves the redox energy in a proton gradient. The sequence is that of NAD(P)H-quinone oxidoreductase chain 4 1 from Trichodesmium erythraeum (strain IMS101).